Consider the following 502-residue polypeptide: MYRQARWDEPLIFELSRPGRVGYTLPKPIEDVKVEIPEKLKRKTPLELPEVSEPEVVKHYTRLSEMNYGVDSGIYPLGSCTMKYNPKINEEIANHPKVAFIHPYQDERTVQGALKIMWELEQWLKEITGMDRFTLQPAAGANGEFTGVMIIKAYHLDRGDTQRTEILVPDSAHGTNPASASMAGFKVVEIPSNENGTVDLEALENAVSERTAGLMLTNPNTLGIFEDEIEEIAKIVHKVGGLLYYDGANLNGILGKVRPGDMGFDIVHLNLHKTFSTPHGGGGPGAGPVGVKEFLKDYLPVPLVSYDEENDRYYLDYNVPKSIGKVKELFGNFAVLVKALTYLKIMGKEGLREVSEVAVLNANYLARKLKGTRGYELPHKELRKHEVVFSAEPMKKETGVRTLDVAKRLLDFGLHAPTIYFPLIVHEALMIEPTESVSKEELDAYVEALKKISEEAYTNPEIVKSAPHNTAVRRVDDVLAAKKPVITWKMYKELKEKGEIDY.

An N6-(pyridoxal phosphate)lysine modification is found at lysine 273.

The protein belongs to the GcvP family. C-terminal subunit subfamily. In terms of assembly, the glycine cleavage system is composed of four proteins: P, T, L and H. In this organism, the P 'protein' is a heterodimer of two subunits. Pyridoxal 5'-phosphate is required as a cofactor.

It catalyses the reaction N(6)-[(R)-lipoyl]-L-lysyl-[glycine-cleavage complex H protein] + glycine + H(+) = N(6)-[(R)-S(8)-aminomethyldihydrolipoyl]-L-lysyl-[glycine-cleavage complex H protein] + CO2. The glycine cleavage system catalyzes the degradation of glycine. The P protein binds the alpha-amino group of glycine through its pyridoxal phosphate cofactor; CO(2) is released and the remaining methylamine moiety is then transferred to the lipoamide cofactor of the H protein. The chain is Probable glycine dehydrogenase (decarboxylating) subunit 2 from Pyrococcus horikoshii (strain ATCC 700860 / DSM 12428 / JCM 9974 / NBRC 100139 / OT-3).